Here is a 442-residue protein sequence, read N- to C-terminus: ORC1-type DNA replication protein 8 (442 aa).

ATP-binding positions include 66-70 (VGKTA) and tyrosine 218.

Belongs to the CDC6/cdc18 family.

Involved in regulation of DNA replication. This is ORC1-type DNA replication protein 8 (cdc6h) from Haloarcula marismortui (strain ATCC 43049 / DSM 3752 / JCM 8966 / VKM B-1809) (Halobacterium marismortui).